The following is a 480-amino-acid chain: Glutamate--tRNA ligase (480 aa).

Residues 9–19 (PSPTGDPHVGT) carry the 'HIGH' region motif. The short motif at 253 to 257 (KISKR) is the 'KMSKS' region element. Lysine 256 is a binding site for ATP.

The protein belongs to the class-I aminoacyl-tRNA synthetase family. Glutamate--tRNA ligase type 1 subfamily. Monomer.

The protein localises to the cytoplasm. It catalyses the reaction tRNA(Glu) + L-glutamate + ATP = L-glutamyl-tRNA(Glu) + AMP + diphosphate. Its function is as follows. Catalyzes the attachment of glutamate to tRNA(Glu) in a two-step reaction: glutamate is first activated by ATP to form Glu-AMP and then transferred to the acceptor end of tRNA(Glu). The protein is Glutamate--tRNA ligase of Deinococcus geothermalis (strain DSM 11300 / CIP 105573 / AG-3a).